Here is a 138-residue protein sequence, read N- to C-terminus: ATP synthase epsilon chain (138 aa).

The protein belongs to the ATPase epsilon chain family. F-type ATPases have 2 components, CF(1) - the catalytic core - and CF(0) - the membrane proton channel. CF(1) has five subunits: alpha(3), beta(3), gamma(1), delta(1), epsilon(1). CF(0) has three main subunits: a, b and c.

The protein localises to the cell inner membrane. Its function is as follows. Produces ATP from ADP in the presence of a proton gradient across the membrane. The polypeptide is ATP synthase epsilon chain (Psychrobacter sp. (strain PRwf-1)).